We begin with the raw amino-acid sequence, 235 residues long: Zinc transporter ZIP9 (235 aa).

The N-linked (GlcNAc...) asparagine glycan is linked to Asn-2. The next 4 membrane-spanning stretches (helical) occupy residues 11 to 31 (SCVP…CWWT), 75 to 95 (TTTL…GAAA), 104 to 124 (LIVF…LVSF), and 138 to 158 (HLLV…LGLS). Asn-169 is a glycosylation site (N-linked (GlcNAc...) asparagine). 2 helical membrane-spanning segments follow: residues 172-192 (GMAM…HVLP) and 214-234 (LEVA…VGHQ).

Belongs to the ZIP transporter (TC 2.A.5) family.

The protein localises to the golgi apparatus. It is found in the trans-Golgi network membrane. It localises to the cell membrane. Its subcellular location is the cytoplasm. The protein resides in the perinuclear region. The protein localises to the mitochondrion. It is found in the nucleus. It catalyses the reaction Zn(2+)(in) = Zn(2+)(out). Its function is as follows. Transports zinc ions across cell and organelle membranes into the cytoplasm and regulates intracellular zinc homeostasis. Participates in the zinc ions efflux out of the secretory compartments. Regulates intracellular zinc level, resulting in the enhancement of AKT1 and MAPK3/MAPK1 (Erk1/2) phosphorylation in response to the BCR activation. Also functions as a membrane androgen receptor that mediates, through a G protein, the non-classical androgen signaling pathway, characterized by the activation of MAPK3/MAPK1 (Erk1/2) and transcription factors CREB1 or ATF1. This pathway contributes to CLDN1 and CLDN5 expression and tight junction formation between adjacent Sertoli cells. Mediates androgen-induced vascular endothelial cell proliferation through activation of an inhibitory G protein leading to the AKT1 and MAPK3/MAPK1 (Erk1/2) activation which in turn modulate inhibition (phosphorylation) of GSK3B and CCND1 transcription. Moreover, has dual functions as a membrane-bound androgen receptor and as an androgen-dependent zinc transporter both of which are mediated through an inhibitory G protein (Gi) that mediates both MAP kinase and zinc signaling leading to the androgen-dependent apoptotic process. This chain is Zinc transporter ZIP9, found in Macaca fascicularis (Crab-eating macaque).